A 381-amino-acid chain; its full sequence is 4-hydroxy-3-methylbut-2-en-1-yl diphosphate synthase (flavodoxin) (381 aa).

4 residues coordinate [4Fe-4S] cluster: C280, C283, C315, and E322.

Belongs to the IspG family. The cofactor is [4Fe-4S] cluster.

The enzyme catalyses (2E)-4-hydroxy-3-methylbut-2-enyl diphosphate + oxidized [flavodoxin] + H2O + 2 H(+) = 2-C-methyl-D-erythritol 2,4-cyclic diphosphate + reduced [flavodoxin]. It functions in the pathway isoprenoid biosynthesis; isopentenyl diphosphate biosynthesis via DXP pathway; isopentenyl diphosphate from 1-deoxy-D-xylulose 5-phosphate: step 5/6. Its function is as follows. Converts 2C-methyl-D-erythritol 2,4-cyclodiphosphate (ME-2,4cPP) into 1-hydroxy-2-methyl-2-(E)-butenyl 4-diphosphate. This Clavibacter michiganensis subsp. michiganensis (strain NCPPB 382) protein is 4-hydroxy-3-methylbut-2-en-1-yl diphosphate synthase (flavodoxin).